A 122-amino-acid polypeptide reads, in one-letter code: Histone H2B.1 (122 aa).

Residues 1–10 are compositionally biased toward low complexity; it reads MAPKKAPAAA. The interval 1 to 28 is disordered; the sequence is MAPKKAPAAAAEKKVKKAPTTEKKNKKK. At A2 the chain carries N,N,N-trimethylalanine. N6-acetyllysine occurs at positions 5 and 42. K116 participates in a covalent cross-link: Glycyl lysine isopeptide (Lys-Gly) (interchain with G-Cter in ubiquitin).

It belongs to the histone H2B family. In terms of assembly, the nucleosome is a histone octamer containing two molecules each of H2A, H2B, H3 and H4 assembled in one H3-H4 heterotetramer and two H2A-H2B heterodimers. The octamer wraps approximately 147 bp of DNA. In terms of processing, acetylation occurs almost exclusively in the MAC. Monoubiquitination to form H2BK115ub1 gives a specific tag for epigenetic transcriptional activation and is also prerequisite for H3K4me and H3K79me formation.

It localises to the nucleus. Its subcellular location is the chromosome. Functionally, core component of nucleosome. Nucleosomes wrap and compact DNA into chromatin, limiting DNA accessibility to the cellular machineries which require DNA as a template. Histones thereby play a central role in transcription regulation, DNA repair, DNA replication and chromosomal stability. DNA accessibility is regulated via a complex set of post-translational modifications of histones, also called histone code, and nucleosome remodeling. The sequence is that of Histone H2B.1 (HTB1) from Tetrahymena thermophila (strain SB210).